The primary structure comprises 254 residues: Ubiquinone biosynthesis O-methyltransferase (254 aa).

S-adenosyl-L-methionine-binding residues include R47, G78, D99, and M141.

Belongs to the methyltransferase superfamily. UbiG/COQ3 family.

It catalyses the reaction a 3-demethylubiquinol + S-adenosyl-L-methionine = a ubiquinol + S-adenosyl-L-homocysteine + H(+). The enzyme catalyses a 3-(all-trans-polyprenyl)benzene-1,2-diol + S-adenosyl-L-methionine = a 2-methoxy-6-(all-trans-polyprenyl)phenol + S-adenosyl-L-homocysteine + H(+). It functions in the pathway cofactor biosynthesis; ubiquinone biosynthesis. In terms of biological role, O-methyltransferase that catalyzes the 2 O-methylation steps in the ubiquinone biosynthetic pathway. The polypeptide is Ubiquinone biosynthesis O-methyltransferase (Rhodopseudomonas palustris (strain BisB18)).